Reading from the N-terminus, the 518-residue chain is MADKLNEYVALIKNEIKKYSKQIFNSEIGKVISVADGIAKVSGLENALLNELIEFENNVQGIALNLEQNTVGVALFGDYSKIREGSTAKRTHNVMQTPVGDVMLGRIVNALGEPVDGRGPIKAEEFDQVEKIAPGVMTRKTVNQPLETGILTIDALFPIGKGQRELIVGDRQTGKTSIAIDTIINQRGKDVYCVYVAMGQKNSSVAQIVHQLEVTDSMKYTTVVCATASDPASMIYLTPFTGITIAEYWLKQGKDVLIVFDDLSKHAIAYRTLSLLLRRPPGREAFPGDVFYLHSRLLERACRLNEEHGGGSITALPIIETQAGDISAYIPTNVISITDGQLFMVSNLFNSGQRPAIHVGLSVSRVGSAAQIKAIKQQTGSLKLELAQYSELDSFSQFGSDLDENTKQILERGKRVMEMIKQPNGKPYSQTHEALFLFAIAKSFIKFIPLDYIAKFKQRIMEEFDKEHPIYKEIATQKSFSEALEAQTNTAFKALVKRFVSALPDYDITKYGTMEELE.

Residue 169–176 (GDRQTGKT) participates in ATP binding.

The protein belongs to the ATPase alpha/beta chains family. F-type ATPases have 2 components, CF(1) - the catalytic core - and CF(0) - the membrane proton channel. CF(1) has five subunits: alpha(3), beta(3), gamma(1), delta(1), epsilon(1). CF(0) has three main subunits: a(1), b(2) and c(9-12). The alpha and beta chains form an alternating ring which encloses part of the gamma chain. CF(1) is attached to CF(0) by a central stalk formed by the gamma and epsilon chains, while a peripheral stalk is formed by the delta and b chains.

It localises to the cell membrane. The enzyme catalyses ATP + H2O + 4 H(+)(in) = ADP + phosphate + 5 H(+)(out). Its function is as follows. Produces ATP from ADP in the presence of a proton gradient across the membrane. The alpha chain is a regulatory subunit. The protein is ATP synthase subunit alpha of Mycoplasma pneumoniae (strain ATCC 29342 / M129 / Subtype 1) (Mycoplasmoides pneumoniae).